Reading from the N-terminus, the 200-residue chain is ATP synthase subunit b (200 aa).

The chain crosses the membrane as a helical span at residues 12–32 (ILSGLAVAVAILVPVLALASG).

This sequence belongs to the ATPase B chain family. As to quaternary structure, F-type ATPases have 2 components, F(1) - the catalytic core - and F(0) - the membrane proton channel. F(1) has five subunits: alpha(3), beta(3), gamma(1), delta(1), epsilon(1). F(0) has three main subunits: a(1), b(2) and c(10-14). The alpha and beta chains form an alternating ring which encloses part of the gamma chain. F(1) is attached to F(0) by a central stalk formed by the gamma and epsilon chains, while a peripheral stalk is formed by the delta and b chains.

It is found in the cell inner membrane. Functionally, f(1)F(0) ATP synthase produces ATP from ADP in the presence of a proton or sodium gradient. F-type ATPases consist of two structural domains, F(1) containing the extramembraneous catalytic core and F(0) containing the membrane proton channel, linked together by a central stalk and a peripheral stalk. During catalysis, ATP synthesis in the catalytic domain of F(1) is coupled via a rotary mechanism of the central stalk subunits to proton translocation. In terms of biological role, component of the F(0) channel, it forms part of the peripheral stalk, linking F(1) to F(0). The polypeptide is ATP synthase subunit b (Trichlorobacter lovleyi (strain ATCC BAA-1151 / DSM 17278 / SZ) (Geobacter lovleyi)).